A 497-amino-acid polypeptide reads, in one-letter code: Aspartyl/glutamyl-tRNA(Asn/Gln) amidotransferase subunit B (497 aa).

It belongs to the GatB/GatE family. GatB subfamily. In terms of assembly, heterotrimer of A, B and C subunits.

It catalyses the reaction L-glutamyl-tRNA(Gln) + L-glutamine + ATP + H2O = L-glutaminyl-tRNA(Gln) + L-glutamate + ADP + phosphate + H(+). The catalysed reaction is L-aspartyl-tRNA(Asn) + L-glutamine + ATP + H2O = L-asparaginyl-tRNA(Asn) + L-glutamate + ADP + phosphate + 2 H(+). Functionally, allows the formation of correctly charged Asn-tRNA(Asn) or Gln-tRNA(Gln) through the transamidation of misacylated Asp-tRNA(Asn) or Glu-tRNA(Gln) in organisms which lack either or both of asparaginyl-tRNA or glutaminyl-tRNA synthetases. The reaction takes place in the presence of glutamine and ATP through an activated phospho-Asp-tRNA(Asn) or phospho-Glu-tRNA(Gln). In Nocardioides sp. (strain ATCC BAA-499 / JS614), this protein is Aspartyl/glutamyl-tRNA(Asn/Gln) amidotransferase subunit B.